A 280-amino-acid chain; its full sequence is Formamidopyrimidine-DNA glycosylase (280 aa).

Pro2 functions as the Schiff-base intermediate with DNA in the catalytic mechanism. Catalysis depends on Glu3, which acts as the Proton donor. Catalysis depends on Lys53, which acts as the Proton donor; for beta-elimination activity. His91, Arg110, and Arg152 together coordinate DNA. Residues 239 to 273 form an FPG-type zinc finger; that stretch reads HVYGRAGQPCDRCGTPIEKIVLGQRGTHFCPVCQP. Arg263 acts as the Proton donor; for delta-elimination activity in catalysis.

The protein belongs to the FPG family. As to quaternary structure, monomer. Requires Zn(2+) as cofactor.

The catalysed reaction is Hydrolysis of DNA containing ring-opened 7-methylguanine residues, releasing 2,6-diamino-4-hydroxy-5-(N-methyl)formamidopyrimidine.. It carries out the reaction 2'-deoxyribonucleotide-(2'-deoxyribose 5'-phosphate)-2'-deoxyribonucleotide-DNA = a 3'-end 2'-deoxyribonucleotide-(2,3-dehydro-2,3-deoxyribose 5'-phosphate)-DNA + a 5'-end 5'-phospho-2'-deoxyribonucleoside-DNA + H(+). Involved in base excision repair of DNA damaged by oxidation or by mutagenic agents. Acts as a DNA glycosylase that recognizes and removes damaged bases. Has a preference for oxidized purines, such as 7,8-dihydro-8-oxoguanine (8-oxoG). Has AP (apurinic/apyrimidinic) lyase activity and introduces nicks in the DNA strand. Cleaves the DNA backbone by beta-delta elimination to generate a single-strand break at the site of the removed base with both 3'- and 5'-phosphates. In Deinococcus radiodurans (strain ATCC 13939 / DSM 20539 / JCM 16871 / CCUG 27074 / LMG 4051 / NBRC 15346 / NCIMB 9279 / VKM B-1422 / R1), this protein is Formamidopyrimidine-DNA glycosylase (mutM).